A 324-amino-acid polypeptide reads, in one-letter code: Beta-ketoacyl-[acyl-carrier-protein] synthase III (324 aa).

Active-site residues include cysteine 114 and histidine 246. The interval glutamine 247–arginine 251 is ACP-binding. Residue asparagine 276 is part of the active site.

It belongs to the thiolase-like superfamily. FabH family. In terms of assembly, homodimer.

It is found in the cytoplasm. It catalyses the reaction malonyl-[ACP] + acetyl-CoA + H(+) = 3-oxobutanoyl-[ACP] + CO2 + CoA. The protein operates within lipid metabolism; fatty acid biosynthesis. Functionally, catalyzes the condensation reaction of fatty acid synthesis by the addition to an acyl acceptor of two carbons from malonyl-ACP. Catalyzes the first condensation reaction which initiates fatty acid synthesis and may therefore play a role in governing the total rate of fatty acid production. Possesses both acetoacetyl-ACP synthase and acetyl transacylase activities. Its substrate specificity determines the biosynthesis of branched-chain and/or straight-chain of fatty acids. This chain is Beta-ketoacyl-[acyl-carrier-protein] synthase III, found in Campylobacter jejuni (strain RM1221).